The following is a 369-amino-acid chain: Glycine oxidase (369 aa).

Residues 14-15 (II), 34-35 (ES), 42-43 (TT), 47-49 (AGM), and Val174 each bind FAD. Residues Arg302 and Arg329 each contribute to the substrate site. FAD is bound at residue 327-333 (HFRNGIL).

Belongs to the DAO family. ThiO subfamily. As to quaternary structure, homotetramer. FAD is required as a cofactor.

It is found in the cytoplasm. The enzyme catalyses glycine + O2 + H2O = glyoxylate + H2O2 + NH4(+). It carries out the reaction N-ethylglycine + O2 + H2O = ethylamine + glyoxylate + H2O2. It catalyses the reaction sarcosine + O2 + H2O = methylamine + glyoxylate + H2O2. The catalysed reaction is D-alanine + O2 + H2O = pyruvate + H2O2 + NH4(+). The enzyme catalyses glyphosate + O2 + H2O = aminomethylphosphonate + glyoxylate + H2O2 + H(+). It functions in the pathway cofactor biosynthesis; thiamine diphosphate biosynthesis. With respect to regulation, is competitively inhibited by glycolate. Its function is as follows. Catalyzes the FAD-dependent oxidative deamination of various amines and D-amino acids to yield the corresponding alpha-keto acids, ammonia/amine, and hydrogen peroxide. Oxidizes sarcosine (N-methylglycine), N-ethylglycine and glycine. Can also oxidize the herbicide glyphosate (N-phosphonomethylglycine). Displays lower activities on D-alanine, D-valine, D-proline and D-methionine. Does not act on L-amino acids and other D-amino acids. Is essential for thiamine biosynthesis since the oxidation of glycine catalyzed by ThiO generates the glycine imine intermediate (dehydroglycine) required for the biosynthesis of the thiazole ring of thiamine pyrophosphate. In Bacillus subtilis (strain 168), this protein is Glycine oxidase.